The sequence spans 508 residues: GATA zinc finger domain-containing protein 13 (508 aa).

Disordered stretches follow at residues Tyr20–Asn51 and Met203–Glu296. Low complexity predominate over residues Asn23–Asn51. A compositionally biased stretch (polar residues) spans Met203 to Leu224. A compositionally biased stretch (low complexity) spans Asn225–Asn247. The span at Leu248–Val266 shows a compositional bias: polar residues. Residues Asn269 to Lys279 show a composition bias toward basic residues. The segment at Cys327–Cys354 adopts a GATA-type zinc-finger fold. Residues Leu356–Asn433 are a coiled coil. Residues Thr399–Asp482 are compositionally biased toward low complexity. The tract at residues Thr399–Ile484 is disordered.

This chain is GATA zinc finger domain-containing protein 13 (gtaM), found in Dictyostelium discoideum (Social amoeba).